We begin with the raw amino-acid sequence, 83 residues long: Small ribosomal subunit protein bS16 (83 aa).

This sequence belongs to the bacterial ribosomal protein bS16 family.

The protein is Small ribosomal subunit protein bS16 of Herminiimonas arsenicoxydans.